The primary structure comprises 191 residues: Probable GTP-binding protein EngB (191 aa).

In terms of domain architecture, EngB-type G spans 19 to 188; that stretch reads NIPEICFMGR…HKKIFELFVE (170 aa). GTP is bound by residues 27–34, 53–57, 70–73, 136–139, and 167–169; these read GRSNVGKS, GRTQL, DLPG, NKFD, and AST. Mg(2+) is bound by residues Ser-34 and Thr-55.

The protein belongs to the TRAFAC class TrmE-Era-EngA-EngB-Septin-like GTPase superfamily. EngB GTPase family. It depends on Mg(2+) as a cofactor.

Functionally, necessary for normal cell division and for the maintenance of normal septation. In Mycoplasma genitalium (strain ATCC 33530 / DSM 19775 / NCTC 10195 / G37) (Mycoplasmoides genitalium), this protein is Probable GTP-binding protein EngB.